The primary structure comprises 529 residues: uncharacterized protein (529 aa).

A helical transmembrane segment spans residues 354–373; the sequence is FHVASFPWISWAILGSYIML.

It localises to the host membrane. This is an uncharacterized protein from Acidianus convivator (ATV).